Here is a 322-residue protein sequence, read N- to C-terminus: Phosphatidylserine decarboxylase proenzyme (322 aa).

Catalysis depends on charge relay system; for autoendoproteolytic cleavage activity residues Asp-90, His-147, and Ser-254. The active-site Schiff-base intermediate with substrate; via pyruvic acid; for decarboxylase activity is Ser-254. A Pyruvic acid (Ser); by autocatalysis modification is found at Ser-254. A disordered region spans residues 294–322 (EVEPVPLPEEEIKAEHDASPLVDDKKDET). The span at 303–322 (EEIKAEHDASPLVDDKKDET) shows a compositional bias: basic and acidic residues.

The protein belongs to the phosphatidylserine decarboxylase family. PSD-B subfamily. Prokaryotic type I sub-subfamily. In terms of assembly, heterodimer of a large membrane-associated beta subunit and a small pyruvoyl-containing alpha subunit. Requires pyruvate as cofactor. Post-translationally, is synthesized initially as an inactive proenzyme. Formation of the active enzyme involves a self-maturation process in which the active site pyruvoyl group is generated from an internal serine residue via an autocatalytic post-translational modification. Two non-identical subunits are generated from the proenzyme in this reaction, and the pyruvate is formed at the N-terminus of the alpha chain, which is derived from the carboxyl end of the proenzyme. The autoendoproteolytic cleavage occurs by a canonical serine protease mechanism, in which the side chain hydroxyl group of the serine supplies its oxygen atom to form the C-terminus of the beta chain, while the remainder of the serine residue undergoes an oxidative deamination to produce ammonia and the pyruvoyl prosthetic group on the alpha chain. During this reaction, the Ser that is part of the protease active site of the proenzyme becomes the pyruvoyl prosthetic group, which constitutes an essential element of the active site of the mature decarboxylase.

It is found in the cell membrane. The catalysed reaction is a 1,2-diacyl-sn-glycero-3-phospho-L-serine + H(+) = a 1,2-diacyl-sn-glycero-3-phosphoethanolamine + CO2. It participates in phospholipid metabolism; phosphatidylethanolamine biosynthesis; phosphatidylethanolamine from CDP-diacylglycerol: step 2/2. Its function is as follows. Catalyzes the formation of phosphatidylethanolamine (PtdEtn) from phosphatidylserine (PtdSer). In Salmonella arizonae (strain ATCC BAA-731 / CDC346-86 / RSK2980), this protein is Phosphatidylserine decarboxylase proenzyme.